We begin with the raw amino-acid sequence, 250 residues long: Ribonuclease 3 (250 aa).

Positions 1–15 (MTKTPAKKKRARSSK) are enriched in basic residues. Residues 1–21 (MTKTPAKKKRARSSKAKGTDA) form a disordered region. Positions 22–150 (NAALEARIGH…VIGAIFLDGG (129 aa)) constitute an RNase III domain. Residue Glu-63 participates in Mg(2+) binding. Residue Asp-67 is part of the active site. Mg(2+) is bound by residues Asp-136 and Glu-139. Glu-139 is an active-site residue. Positions 175 to 244 (DPKTVLQEWA…ASVMIEREGV (70 aa)) constitute a DRBM domain.

This sequence belongs to the ribonuclease III family. Homodimer. Mg(2+) serves as cofactor.

It localises to the cytoplasm. The catalysed reaction is Endonucleolytic cleavage to 5'-phosphomonoester.. Functionally, digests double-stranded RNA. Involved in the processing of primary rRNA transcript to yield the immediate precursors to the large and small rRNAs (23S and 16S). Processes some mRNAs, and tRNAs when they are encoded in the rRNA operon. Processes pre-crRNA and tracrRNA of type II CRISPR loci if present in the organism. The sequence is that of Ribonuclease 3 from Bradyrhizobium diazoefficiens (strain JCM 10833 / BCRC 13528 / IAM 13628 / NBRC 14792 / USDA 110).